We begin with the raw amino-acid sequence, 385 residues long: 8-amino-7-oxononanoate synthase (385 aa).

Arg-21 provides a ligand contact to substrate. Residue 108–109 (GF) participates in pyridoxal 5'-phosphate binding. His-133 serves as a coordination point for substrate. The pyridoxal 5'-phosphate site is built by Ser-179, His-207, and Thr-233. Residue Lys-236 is modified to N6-(pyridoxal phosphate)lysine. Position 352 (Thr-352) interacts with substrate.

It belongs to the class-II pyridoxal-phosphate-dependent aminotransferase family. BioF subfamily. Homodimer. Pyridoxal 5'-phosphate serves as cofactor.

It catalyses the reaction 6-carboxyhexanoyl-[ACP] + L-alanine + H(+) = (8S)-8-amino-7-oxononanoate + holo-[ACP] + CO2. It participates in cofactor biosynthesis; biotin biosynthesis. Catalyzes the decarboxylative condensation of pimeloyl-[acyl-carrier protein] and L-alanine to produce 8-amino-7-oxononanoate (AON), [acyl-carrier protein], and carbon dioxide. The protein is 8-amino-7-oxononanoate synthase of Klebsiella pneumoniae subsp. pneumoniae (strain ATCC 700721 / MGH 78578).